A 179-amino-acid polypeptide reads, in one-letter code: Large ribosomal subunit protein uL5 (179 aa).

The protein belongs to the universal ribosomal protein uL5 family. Part of the 50S ribosomal subunit; part of the 5S rRNA/L5/L18/L25 subcomplex. Contacts the 5S rRNA and the P site tRNA. Forms a bridge to the 30S subunit in the 70S ribosome.

Functionally, this is one of the proteins that bind and probably mediate the attachment of the 5S RNA into the large ribosomal subunit, where it forms part of the central protuberance. In the 70S ribosome it contacts protein S13 of the 30S subunit (bridge B1b), connecting the 2 subunits; this bridge is implicated in subunit movement. Contacts the P site tRNA; the 5S rRNA and some of its associated proteins might help stabilize positioning of ribosome-bound tRNAs. The sequence is that of Large ribosomal subunit protein uL5 from Shewanella putrefaciens (strain CN-32 / ATCC BAA-453).